A 335-amino-acid polypeptide reads, in one-letter code: G-protein coupled receptor 157 (335 aa).

Residues 1–15 (MQPSPPPTELVPSER) lie on the Extracellular side of the membrane. Residues 16 to 36 (AVVLLSCALSALGSGLLVATH) form a helical membrane-spanning segment. The Cytoplasmic segment spans residues 37–48 (ALWPDLRSRARR). The helical transmembrane segment at 49-69 (LLLFLSLADLLSAASYFYGVL) threads the bilayer. The Extracellular segment spans residues 70–87 (QNFAGPSWDCVLQGALST). Residues 88-108 (FANTSSFFWTVAIALYLYLSI) form a helical membrane-spanning segment. The Cytoplasmic portion of the chain corresponds to 109–119 (VRAARGPRTDR). A helical transmembrane segment spans residues 120 to 140 (LLWAFHVVSWGVPLVITVAAV). Topologically, residues 141-166 (ALKKIGYDASDVSVGWCWIDLEAKDH) are extracellular. Residues 167–187 (VLWMLLTGKLWEMLAYVLLPL) form a helical membrane-spanning segment. Topologically, residues 188-226 (LYLLVRKHINRAHTALSEYRPILSQEHRLLRHSSMADKK) are cytoplasmic. The helical transmembrane segment at 227–247 (LVLIPLIFIGLRVWSTVRFVL) threads the bilayer. Topologically, residues 248 to 258 (TLCGSPAVQTP) are extracellular. Residues 259 to 279 (VLVVLHGIGNTFQGGANCIMF) form a helical membrane-spanning segment. The Cytoplasmic portion of the chain corresponds to 280–335 (VLCTRAVRTRLFSLCCCCCSSQPPTKSPAGTPKAPAPSKPGESQESQGTPGELPST). Residues 300–335 (SQPPTKSPAGTPKAPAPSKPGESQESQGTPGELPST) are disordered. Residues 320 to 335 (GESQESQGTPGELPST) show a composition bias toward polar residues.

It belongs to the G-protein coupled receptor 2 family.

The protein resides in the cell projection. It is found in the cilium membrane. Orphan receptor that promotes neuronal differentiation of radial glial progenitors (RGPs). The activity of this receptor is mediated by a G(q)-protein that activates a phosphatidylinositol-calcium second messenger. The chain is G-protein coupled receptor 157 (GPR157) from Homo sapiens (Human).